We begin with the raw amino-acid sequence, 207 residues long: Small ribosomal subunit protein uS4 (207 aa).

Positions 31–55 (KCKLDSKPGQHGRTSGARTSDYGTQ) are disordered. The span at 42–53 (GRTSGARTSDYG) shows a compositional bias: polar residues. The 61-residue stretch at 97–157 (SRLDNVVYRM…EQKKKQARIL (61 aa)) folds into the S4 RNA-binding domain.

This sequence belongs to the universal ribosomal protein uS4 family. As to quaternary structure, part of the 30S ribosomal subunit. Contacts protein S5. The interaction surface between S4 and S5 is involved in control of translational fidelity.

Functionally, one of the primary rRNA binding proteins, it binds directly to 16S rRNA where it nucleates assembly of the body of the 30S subunit. With S5 and S12 plays an important role in translational accuracy. In Paraburkholderia xenovorans (strain LB400), this protein is Small ribosomal subunit protein uS4.